The primary structure comprises 1207 residues: DNA-directed RNA polymerase subunit beta' (1207 aa).

Residues cysteine 60, cysteine 62, cysteine 75, and cysteine 78 each contribute to the Zn(2+) site. Positions 450, 452, and 454 each coordinate Mg(2+). Zn(2+)-binding residues include cysteine 818, cysteine 892, cysteine 899, and cysteine 902.

It belongs to the RNA polymerase beta' chain family. In terms of assembly, the RNAP catalytic core consists of 2 alpha, 1 beta, 1 beta' and 1 omega subunit. When a sigma factor is associated with the core the holoenzyme is formed, which can initiate transcription. The cofactor is Mg(2+). Zn(2+) serves as cofactor.

The enzyme catalyses RNA(n) + a ribonucleoside 5'-triphosphate = RNA(n+1) + diphosphate. Its function is as follows. DNA-dependent RNA polymerase catalyzes the transcription of DNA into RNA using the four ribonucleoside triphosphates as substrates. The polypeptide is DNA-directed RNA polymerase subunit beta' (Lactococcus lactis subsp. cremoris (strain MG1363)).